Here is a 487-residue protein sequence, read N- to C-terminus: uncharacterized protein (487 aa).

3 disordered regions span residues 35–153 (VSRK…SGDQ), 237–345 (NTTK…AKAL), and 358–395 (QKRKREEIVRKKEERRHAPVSEKKEVPTTVSTNTSSAA). Residues 54-96 (FDQEDILDTVPEQTDENEDEAGDDELESEKEELDYDEEEDDED) show a composition bias toward acidic residues. Residues 97–132 (RRERTSRYTSEKKGSRKDSVEGDENKKENGQDETKR) are compositionally biased toward basic and acidic residues. Over residues 241–253 (SKSRGRDTRKRRS) the composition is skewed to basic residues. The span at 254-264 (SSYSSTSSSSD) shows a compositional bias: low complexity. Composition is skewed to basic and acidic residues over residues 273–338 (SRSD…KHSA) and 358–383 (QKRKREEIVRKKEERRHAPVSEKKEV). Positions 385–395 (TTVSTNTSSAA) are enriched in low complexity.

This is an uncharacterized protein from Caenorhabditis elegans.